The primary structure comprises 283 residues: Bifunctional protein FolD (283 aa).

Residues 166 to 168 and S191 contribute to the NADP(+) site; that span reads GRS.

The protein belongs to the tetrahydrofolate dehydrogenase/cyclohydrolase family. In terms of assembly, homodimer.

The enzyme catalyses (6R)-5,10-methylene-5,6,7,8-tetrahydrofolate + NADP(+) = (6R)-5,10-methenyltetrahydrofolate + NADPH. The catalysed reaction is (6R)-5,10-methenyltetrahydrofolate + H2O = (6R)-10-formyltetrahydrofolate + H(+). It functions in the pathway one-carbon metabolism; tetrahydrofolate interconversion. Catalyzes the oxidation of 5,10-methylenetetrahydrofolate to 5,10-methenyltetrahydrofolate and then the hydrolysis of 5,10-methenyltetrahydrofolate to 10-formyltetrahydrofolate. The chain is Bifunctional protein FolD from Pediococcus pentosaceus (strain ATCC 25745 / CCUG 21536 / LMG 10740 / 183-1w).